Consider the following 84-residue polypeptide: Beta-mammal toxin Cn2 (84 aa).

Positions 1-16 (LLIITACLALIGTVWA) are cleaved as a signal peptide. The region spanning 17-82 (KEGYLVDKNT…VWPLPNKRCS (66 aa)) is the LCN-type CS-alpha/beta domain. 4 disulfide bridges follow: Cys28–Cys81, Cys32–Cys57, Cys41–Cys62, and Cys45–Cys64. Position 82 is a serine amide (Ser82).

Belongs to the long (4 C-C) scorpion toxin superfamily. Sodium channel inhibitor family. Beta subfamily. As to expression, expressed by the venom gland.

It is found in the secreted. In terms of biological role, mammal beta-toxins bind voltage-independently at site-4 of sodium channels (Nav) and shift the activation voltage to more negative potentials. This toxin is active against mammals. This chain is Beta-mammal toxin Cn2, found in Centruroides noxius (Mexican scorpion).